A 999-amino-acid chain; its full sequence is Ulvan lyase, long isoform (999 aa).

The first 21 residues, 1 to 21 (MKCLKTLLVSTTLLGAFSLNA), serve as a signal peptide directing secretion. 126-127 (SH) serves as a coordination point for substrate. The active-site Proton donor/acceptor is His127. Residues Asp189, Asp199, and Lys201 each coordinate Ca(2+). Residues Tyr280 and Arg297 each coordinate substrate. Residues Asp300, Asp303, and Tyr305 each contribute to the Ca(2+) site. Tyr361 contributes to the substrate binding site.

It belongs to the polysaccharide lyase 24 family.

Functionally, ulvan lyase involved in ulvan degradation. Ulvan is the main polysaccharide component of the Ulvales (green seaweed) cell wall. It is composed of disaccharide building blocks comprising 3-sulfated rhamnose (Rha3S) linked to D-glucuronic acid (GlcA), L-iduronic acid (IduA), or D-xylose (Xyl). Ulvan lyase catalyzes preferentially the endolytic cleavage of the glycosidic bond between Rha3S and the uronic acid GlcA, but not IduA, producing oligosaccharides that have unsaturated 4-deoxy-L-threo-hex-4-enopyranosiduronic acid (deltaUA) at the non-reducing end. The most abundant end products in the degradation of the ulvan polysaccharide were deltaUA-Rha3S disaccharides and deltaUA-Rha3S-IduA-Rha3S and deltaUA-Rha3S-Xyl-Rha3S tetrasaccharides. The polypeptide is Ulvan lyase, long isoform (Alteromonas sp).